A 360-amino-acid polypeptide reads, in one-letter code: Phospho-N-acetylmuramoyl-pentapeptide-transferase (360 aa).

10 consecutive transmembrane segments (helical) span residues 25-45 (RGIL…PWMI), 73-93 (TMGG…WADL), 97-117 (YVWV…VDDY), 132-152 (WKYF…YMTA), 168-188 (VSIP…VGSS), 199-219 (GLAI…CYLS), 236-256 (AGEL…FLWF), 263-283 (VFMG…IAVI), 288-308 (IVLF…VIQV), and 338-358 (VIVR…ATLK).

It belongs to the glycosyltransferase 4 family. MraY subfamily. Mg(2+) is required as a cofactor.

It localises to the cell inner membrane. The enzyme catalyses UDP-N-acetyl-alpha-D-muramoyl-L-alanyl-gamma-D-glutamyl-meso-2,6-diaminopimeloyl-D-alanyl-D-alanine + di-trans,octa-cis-undecaprenyl phosphate = di-trans,octa-cis-undecaprenyl diphospho-N-acetyl-alpha-D-muramoyl-L-alanyl-D-glutamyl-meso-2,6-diaminopimeloyl-D-alanyl-D-alanine + UMP. Its pathway is cell wall biogenesis; peptidoglycan biosynthesis. Its function is as follows. Catalyzes the initial step of the lipid cycle reactions in the biosynthesis of the cell wall peptidoglycan: transfers peptidoglycan precursor phospho-MurNAc-pentapeptide from UDP-MurNAc-pentapeptide onto the lipid carrier undecaprenyl phosphate, yielding undecaprenyl-pyrophosphoryl-MurNAc-pentapeptide, known as lipid I. The protein is Phospho-N-acetylmuramoyl-pentapeptide-transferase of Pseudomonas fluorescens (strain ATCC BAA-477 / NRRL B-23932 / Pf-5).